Reading from the N-terminus, the 698-residue chain is MSDPASTIPPAHHPTFWRERAVSYTAADITELDDVQHTRLRPAVNLGLDVLNTALREIVDNAIEEVADPGHGGSTVTITLHADGSVSVADDGRGLPVDTDPTTGKNGIVKTLGTARAGGKFSAHKDATSTGAGLNGIGAAAAVFISARTDVTVRRDGKTFLQSFGRGYPGVFEGKEFDPEAPFTRNDTQKLRGVSNRKPDLHGTEVRILFDPAIAPDSTLDIGEVLLRAHAAARMSPGVHLVVVDEGWPGEEVPPAVLEPFSGPWGTDTLLDLMCTAAGTPLPEVRAVVEGRGEYTTGRGPTPFRWSLTAGPAEPATVAAFCNTVRTPGGGSHLTAAIKGLSEALAERASRMRDLGLAKNEEGPEPQDFAAVTALAVDTRAPDVAWDSQAKTAVSSRSLNLAMAPDVARSVTIWAANPANADTVTLWSKLALESARARRSAEGAKARARAASKAKGLGTNLSLPPKLLPSRESGRGSGAELFLCEGDSALGTIKAARDATFQAAFPLKGKPPNVYGFPLNKARAKDEFDAIERILGCGVRDHCDPELCRYDRILFASDADPDGGNINSSLISMFLDFYRPLVEAGMVYVTMPPLFVVKAGDERIYCQDESERDAAVAQLKASSNRRVEVQRNKGLGEMDADDFWNTVLDPQRRTVIRVRPDESEKKLHHTLFGGPPEGRRTWMADVAARVDTSALDLT.

Lys429 participates in a covalent cross-link: Isoglutamyl lysine isopeptide (Lys-Gln) (interchain with Q-Cter in protein Pup). The segment at 443–473 is disordered; sequence GAKARARAASKAKGLGTNLSLPPKLLPSRES. The Toprim domain occupies 479-593; it reads AELFLCEGDS…AGMVYVTMPP (115 aa).

The protein belongs to the type II topoisomerase family. A complex of TopoN and TopoM, possibly a heterotetramer. Mg(2+) serves as cofactor.

The enzyme catalyses ATP-dependent breakage, passage and rejoining of double-stranded DNA.. With respect to regulation, inhibited by quinolone antibiotic ciprofloxacin and coumarin antibiotic novobiocin, but at much higher concentrations than is usual for DNA gyrase/topoisomerase. Catalyzes the relaxation of negatively supercoiled DNA in the presence of ATP or dATP but not other nucleotides. Individual subunits have no activity. Not able to negatively supercoil DNA, it can however introduce positive supercoils in DNA. Relaxes positive supercoils in an ATP-dependent manner. Catenates and decatenates DNA. Generates dsDNA breaks in the presence of the quinolone antibiotic ciprofloxacin, showing it is a topoisomerase. In Mycolicibacterium smegmatis (strain ATCC 700084 / mc(2)155) (Mycobacterium smegmatis), this protein is Topoisomerase subunit TopoN.